The chain runs to 332 residues: Holliday junction branch migration complex subunit RuvB (332 aa).

Residues 1–181 (MARILDNNVM…FGITGHMEYY (181 aa)) are large ATPase domain (RuvB-L). ATP contacts are provided by residues Leu-20, Arg-21, Gly-62, Lys-65, Thr-66, Thr-67, 128-130 (EDF), Arg-171, Tyr-181, and Arg-218. Thr-66 contributes to the Mg(2+) binding site. The tract at residues 182–252 (QEKDLTEIVE…ITDRALTMLD (71 aa)) is small ATPAse domain (RuvB-S). Residues 255–332 (REGLDYIDQK…RHLGYPYQNT (78 aa)) are head domain (RuvB-H). DNA-binding residues include Arg-291, Arg-310, Arg-312, and Arg-315.

This sequence belongs to the RuvB family. Homohexamer. Forms an RuvA(8)-RuvB(12)-Holliday junction (HJ) complex. HJ DNA is sandwiched between 2 RuvA tetramers; dsDNA enters through RuvA and exits via RuvB. An RuvB hexamer assembles on each DNA strand where it exits the tetramer. Each RuvB hexamer is contacted by two RuvA subunits (via domain III) on 2 adjacent RuvB subunits; this complex drives branch migration. In the full resolvosome a probable DNA-RuvA(4)-RuvB(12)-RuvC(2) complex forms which resolves the HJ.

It localises to the cytoplasm. It carries out the reaction ATP + H2O = ADP + phosphate + H(+). Functionally, the RuvA-RuvB-RuvC complex processes Holliday junction (HJ) DNA during genetic recombination and DNA repair, while the RuvA-RuvB complex plays an important role in the rescue of blocked DNA replication forks via replication fork reversal (RFR). RuvA specifically binds to HJ cruciform DNA, conferring on it an open structure. The RuvB hexamer acts as an ATP-dependent pump, pulling dsDNA into and through the RuvAB complex. RuvB forms 2 homohexamers on either side of HJ DNA bound by 1 or 2 RuvA tetramers; 4 subunits per hexamer contact DNA at a time. Coordinated motions by a converter formed by DNA-disengaged RuvB subunits stimulates ATP hydrolysis and nucleotide exchange. Immobilization of the converter enables RuvB to convert the ATP-contained energy into a lever motion, pulling 2 nucleotides of DNA out of the RuvA tetramer per ATP hydrolyzed, thus driving DNA branch migration. The RuvB motors rotate together with the DNA substrate, which together with the progressing nucleotide cycle form the mechanistic basis for DNA recombination by continuous HJ branch migration. Branch migration allows RuvC to scan DNA until it finds its consensus sequence, where it cleaves and resolves cruciform DNA. This Streptococcus pyogenes serotype M1 protein is Holliday junction branch migration complex subunit RuvB.